The following is a 742-amino-acid chain: 5-methyltetrahydropteroyltriglutamate--homocysteine methyltransferase (742 aa).

5-methyltetrahydropteroyltri-L-glutamate-binding positions include 18 to 21 and Lys-112; that span reads REWK. Residues 420 to 422 and Glu-473 each bind L-homocysteine; that span reads IGS. L-methionine is bound by residues 420 to 422 and Glu-473; that span reads IGS. 5-methyltetrahydropteroyltri-L-glutamate is bound at residue Trp-550. Asp-588 is a binding site for L-homocysteine. Residue Asp-588 coordinates L-methionine. Residue Glu-594 coordinates 5-methyltetrahydropteroyltri-L-glutamate. Zn(2+)-binding residues include His-630, Cys-632, and Glu-654. The Proton donor role is filled by His-683. Cys-715 provides a ligand contact to Zn(2+).

It belongs to the vitamin-B12 independent methionine synthase family. Zn(2+) serves as cofactor.

The enzyme catalyses 5-methyltetrahydropteroyltri-L-glutamate + L-homocysteine = tetrahydropteroyltri-L-glutamate + L-methionine. The protein operates within amino-acid biosynthesis; L-methionine biosynthesis via de novo pathway; L-methionine from L-homocysteine (MetE route): step 1/1. Functionally, catalyzes the transfer of a methyl group from 5-methyltetrahydrofolate to homocysteine resulting in methionine formation. This Staphylococcus aureus (strain JH9) protein is 5-methyltetrahydropteroyltriglutamate--homocysteine methyltransferase.